Consider the following 334-residue polypeptide: N-acetyl-gamma-glutamyl-phosphate reductase (334 aa).

Residue C154 is part of the active site.

The protein belongs to the NAGSA dehydrogenase family. Type 1 subfamily.

It localises to the cytoplasm. The catalysed reaction is N-acetyl-L-glutamate 5-semialdehyde + phosphate + NADP(+) = N-acetyl-L-glutamyl 5-phosphate + NADPH + H(+). Its pathway is amino-acid biosynthesis; L-arginine biosynthesis; N(2)-acetyl-L-ornithine from L-glutamate: step 3/4. Functionally, catalyzes the NADPH-dependent reduction of N-acetyl-5-glutamyl phosphate to yield N-acetyl-L-glutamate 5-semialdehyde. The chain is N-acetyl-gamma-glutamyl-phosphate reductase from Shigella flexneri.